Consider the following 533-residue polypeptide: Retinoid isomerohydrolase (533 aa).

An N-acetylserine modification is found at serine 2. Residues threonine 101 and threonine 105 each carry the phosphothreonine modification. A lipid anchor (S-palmitoyl cysteine; in membrane form) is attached at cysteine 112. Lysine 113 is modified (N6-acetyllysine). Serine 117 bears the Phosphoserine mark. Histidine 180 contacts Fe cation. Residue cysteine 231 is the site of S-palmitoyl cysteine; in membrane form attachment. Residues histidine 241 and histidine 313 each contribute to the Fe cation site. S-palmitoyl cysteine; in membrane form attachment occurs at residues cysteine 329 and cysteine 330. A Fe cation-binding site is contributed by histidine 527.

This sequence belongs to the carotenoid oxygenase family. As to quaternary structure, interacts with MYO7A; this mediates light-dependent intracellular transport of RPE65. Fe(2+) serves as cofactor. In terms of processing, palmitoylation by LRAT regulates ligand binding specificity; the palmitoylated form (membrane form) specifically binds all-trans-retinyl-palmitate, while the soluble unpalmitoylated form binds all-trans-retinol (vitamin A). Retinal pigment epithelium specific.

It localises to the cytoplasm. The protein localises to the cell membrane. The protein resides in the microsome membrane. The enzyme catalyses an all-trans-retinyl ester + H2O = 11-cis-retinol + a fatty acid + H(+). It carries out the reaction lutein = (3R,3'S)-zeaxanthin. It catalyses the reaction all-trans-retinyl hexadecanoate + H2O = 11-cis-retinol + hexadecanoate + H(+). Its function is as follows. Critical isomerohydrolase in the retinoid cycle involved in regeneration of 11-cis-retinal, the chromophore of rod and cone opsins. Catalyzes the cleavage and isomerization of all-trans-retinyl fatty acid esters to 11-cis-retinol which is further oxidized by 11-cis retinol dehydrogenase to 11-cis-retinal for use as visual chromophore. Essential for the production of 11-cis retinal for both rod and cone photoreceptors. Also capable of catalyzing the isomerization of lutein to meso-zeaxanthin an eye-specific carotenoid. The soluble form binds vitamin A (all-trans-retinol), making it available for LRAT processing to all-trans-retinyl ester. The membrane form, palmitoylated by LRAT, binds all-trans-retinyl esters, making them available for IMH (isomerohydrolase) processing to all-cis-retinol. The soluble form is regenerated by transferring its palmitoyl groups onto 11-cis-retinol, a reaction catalyzed by LRAT. The chain is Retinoid isomerohydrolase (RPE65) from Chlorocebus aethiops (Green monkey).